Reading from the N-terminus, the 510-residue chain is 2,3-bisphosphoglycerate-independent phosphoglycerate mutase (510 aa).

Mn(2+)-binding residues include Asp12 and Ser62. Ser62 serves as the catalytic Phosphoserine intermediate. Substrate-binding positions include His123, 153 to 154, Arg185, Arg191, 261 to 264, and Lys336; these read RD and RPDR. Asp403, His407, Asp444, His445, and His462 together coordinate Mn(2+).

Belongs to the BPG-independent phosphoglycerate mutase family. As to quaternary structure, monomer. Mn(2+) serves as cofactor.

It catalyses the reaction (2R)-2-phosphoglycerate = (2R)-3-phosphoglycerate. The protein operates within carbohydrate degradation; glycolysis; pyruvate from D-glyceraldehyde 3-phosphate: step 3/5. Essential for rapid growth and for sporulation. Catalyzes the interconversion of 2-phosphoglycerate and 3-phosphoglycerate. The chain is 2,3-bisphosphoglycerate-independent phosphoglycerate mutase from Priestia megaterium (strain ATCC 12872 / QMB1551) (Bacillus megaterium).